The sequence spans 196 residues: DnaA initiator-associating protein DiaA (196 aa).

The SIS domain maps to 34–196; it reads LVQSLLNGNK…DNTLFPHQDD (163 aa).

Belongs to the SIS family. DiaA subfamily. As to quaternary structure, homotetramer; dimer of dimers.

Its function is as follows. Required for the timely initiation of chromosomal replication via direct interactions with the DnaA initiator protein. This chain is DnaA initiator-associating protein DiaA, found in Klebsiella pneumoniae (strain 342).